Consider the following 254-residue polypeptide: Pyridoxine 5'-phosphate synthase (254 aa).

Residue Asn-8 participates in 3-amino-2-oxopropyl phosphate binding. 10–11 (DH) is a 1-deoxy-D-xylulose 5-phosphate binding site. Arg-19 serves as a coordination point for 3-amino-2-oxopropyl phosphate. His-44 (proton acceptor) is an active-site residue. 1-deoxy-D-xylulose 5-phosphate is bound by residues Arg-46 and His-51. The active-site Proton acceptor is the Glu-74. Thr-104 contributes to the 1-deoxy-D-xylulose 5-phosphate binding site. The active-site Proton donor is the His-198. Residues Gly-199 and 220–221 (GH) contribute to the 3-amino-2-oxopropyl phosphate site.

The protein belongs to the PNP synthase family. In terms of assembly, homooctamer; tetramer of dimers.

Its subcellular location is the cytoplasm. It catalyses the reaction 3-amino-2-oxopropyl phosphate + 1-deoxy-D-xylulose 5-phosphate = pyridoxine 5'-phosphate + phosphate + 2 H2O + H(+). The protein operates within cofactor biosynthesis; pyridoxine 5'-phosphate biosynthesis; pyridoxine 5'-phosphate from D-erythrose 4-phosphate: step 5/5. Catalyzes the complicated ring closure reaction between the two acyclic compounds 1-deoxy-D-xylulose-5-phosphate (DXP) and 3-amino-2-oxopropyl phosphate (1-amino-acetone-3-phosphate or AAP) to form pyridoxine 5'-phosphate (PNP) and inorganic phosphate. This chain is Pyridoxine 5'-phosphate synthase, found in Caulobacter vibrioides (strain ATCC 19089 / CIP 103742 / CB 15) (Caulobacter crescentus).